A 302-amino-acid polypeptide reads, in one-letter code: uncharacterized protein (302 aa).

May be a membrane-bound protein, possibly involved in IAA or IAA-Lysine transport. This is an uncharacterized protein from Pseudomonas savastanoi (Pseudomonas syringae pv. savastanoi).